The sequence spans 337 residues: Membrane-spanning 4-domains subfamily A member 18 (337 aa).

Residues 101 to 121 form a disordered region; that stretch reads LGTTDLQTQPGGPQNPPTCAP. The next 4 membrane-spanning stretches (helical) occupy residues 155–175, 183–203, 220–240, and 252–272; these read LGAI…NPSL, AISG…SLSV, MNVV…VDLI, and GGLL…SHFG.

It belongs to the MS4A family.

It is found in the membrane. In Bos taurus (Bovine), this protein is Membrane-spanning 4-domains subfamily A member 18 (MS4A18).